The primary structure comprises 702 residues: Elongation factor G (702 aa).

Positions Glu-8–Val-290 constitute a tr-type G domain. Residues Ala-17–Thr-24, Asp-88–His-92, and Asn-142–Asp-145 each bind GTP.

Belongs to the TRAFAC class translation factor GTPase superfamily. Classic translation factor GTPase family. EF-G/EF-2 subfamily.

Its subcellular location is the cytoplasm. Catalyzes the GTP-dependent ribosomal translocation step during translation elongation. During this step, the ribosome changes from the pre-translocational (PRE) to the post-translocational (POST) state as the newly formed A-site-bound peptidyl-tRNA and P-site-bound deacylated tRNA move to the P and E sites, respectively. Catalyzes the coordinated movement of the two tRNA molecules, the mRNA and conformational changes in the ribosome. The sequence is that of Elongation factor G from Acidovorax ebreus (strain TPSY) (Diaphorobacter sp. (strain TPSY)).